Reading from the N-terminus, the 149-residue chain is Oligosaccharyltransferase complex subunit ostc (149 aa).

At 1–32 the chain is on the cytoplasmic side; it reads METLFSLPFTVLECPNVKLKKPSWLHMPSAMT. The helical transmembrane segment at 33-53 threads the bilayer; the sequence is VYAVVIVSYFLITGGIIYDVI. Residues 54–83 are Extracellular-facing; that stretch reads VEPPSVGSMTDEHGHQRPVAFLAYRVNGQY. The helical transmembrane segment at 84–104 threads the bilayer; the sequence is IMEGLASSFLFTMGGLGFIIL. The Cytoplasmic segment spans residues 105–117; that stretch reads DRSNAPNIPKLNR. The chain crosses the membrane as a helical span at residues 118–138; sequence FLLLFIGFVSVLLSFFMARVF. At 139–149 the chain is on the extracellular side; sequence MRMKLPGYLMG.

Belongs to the OSTC family. In terms of assembly, specific component of the STT3A-containing form of the oligosaccharyltransferase (OST) complex.

The protein resides in the membrane. The protein operates within protein modification; protein glycosylation. Specific component of the STT3A-containing form of the oligosaccharyl transferase (OST) complex that catalyzes the initial transfer of a defined glycan (Glc(3)Man(9)GlcNAc(2) in eukaryotes) from the lipid carrier dolichol-pyrophosphate to an asparagine residue within an Asn-X-Ser/Thr consensus motif in nascent polypeptide chains, the first step in protein N-glycosylation. N-glycosylation occurs cotranslationally and the complex associates with the Sec61 complex at the channel-forming translocon complex that mediates protein translocation across the endoplasmic reticulum (ER). All subunits are required for a maximal enzyme activity. The polypeptide is Oligosaccharyltransferase complex subunit ostc (Danio rerio (Zebrafish)).